Consider the following 230-residue polypeptide: Gilatoxin (230 aa).

Positions Ile1–Ile230 constitute a Peptidase S1 domain. Intrachain disulfides connect Cys7-Cys146, Cys26-Cys42, Cys125-Cys193, Cys157-Cys172, and Cys183-Cys208. The active-site Charge relay system is His41. Asn84 carries N-linked (GlcNAc...) asparagine glycosylation. Asp93 serves as the catalytic Charge relay system. Ser187 acts as the Charge relay system in catalysis.

It belongs to the peptidase S1 family. In terms of processing, extensively glycosylated, contains approximately 8 mol of monosaccharide per mol of toxin. As to expression, expressed by the mandibular venom gland.

Its subcellular location is the secreted. Its function is as follows. Has kallikrein-like activity, releases bradykinin from kininogen. Catalyzes the hydrolysis of various arginine ester substrates for trypsin and thrombin and degrades both angiotensin I and II by cleavage of the dipeptide Asp-Arg from the NH2-terminal end. Fibrinogen is also degraded but a fibrin clot is not produced. May have a potentiating effect on potent hemorrhagic toxins present in the venom. The sequence is that of Gilatoxin from Heloderma horridum horridum (Mexican beaded lizard).